A 368-amino-acid polypeptide reads, in one-letter code: Quinolinate synthase (368 aa).

Residues His46 and Ser63 each contribute to the iminosuccinate site. Cys110 serves as a coordination point for [4Fe-4S] cluster. Iminosuccinate is bound by residues 141–143 (YVN) and Ser162. Cys230 serves as a coordination point for [4Fe-4S] cluster. Residues 256–258 (HPE) and Thr273 each bind iminosuccinate. Cys320 contributes to the [4Fe-4S] cluster binding site.

This sequence belongs to the quinolinate synthase family. Type 3 subfamily. [4Fe-4S] cluster is required as a cofactor.

It localises to the cytoplasm. It carries out the reaction iminosuccinate + dihydroxyacetone phosphate = quinolinate + phosphate + 2 H2O + H(+). It functions in the pathway cofactor biosynthesis; NAD(+) biosynthesis; quinolinate from iminoaspartate: step 1/1. In terms of biological role, catalyzes the condensation of iminoaspartate with dihydroxyacetone phosphate to form quinolinate. In Bacillus anthracis (strain A0248), this protein is Quinolinate synthase.